The sequence spans 195 residues: Der GTPase-activating protein YihI (195 aa).

Positions 1 to 81 (MSRTKKTRRI…KAVVKEVKDP (81 aa)) are disordered. 3 stretches are compositionally biased toward basic and acidic residues: residues 9–23 (RITD…DKPK), 38–49 (TRYELDAQAREE), and 66–81 (DPAE…VKDP).

This sequence belongs to the YihI family. As to quaternary structure, interacts with Der.

A GTPase-activating protein (GAP) that modifies Der/EngA GTPase function. May play a role in ribosome biogenesis. The sequence is that of Der GTPase-activating protein YihI from Mannheimia haemolytica (Pasteurella haemolytica).